The chain runs to 467 residues: Fumarate hydratase class II (467 aa).

Substrate-binding positions include 98-100, Arg126, 129-132, 139-141, and Thr187; these read SGT, HPND, and SSN. Residue His188 is the Proton donor/acceptor of the active site. Residue Ser318 is part of the active site. Residues Ser319 and 324-326 each bind substrate; that span reads KVN.

The protein belongs to the class-II fumarase/aspartase family. Fumarase subfamily. In terms of assembly, homotetramer.

The protein resides in the cytoplasm. The enzyme catalyses (S)-malate = fumarate + H2O. It participates in carbohydrate metabolism; tricarboxylic acid cycle; (S)-malate from fumarate: step 1/1. Involved in the TCA cycle. Catalyzes the stereospecific interconversion of fumarate to L-malate. This is Fumarate hydratase class II from Salmonella typhi.